Here is a 382-residue protein sequence, read N- to C-terminus: UDP-N-acetylenolpyruvoylglucosamine reductase (382 aa).

Residues 50–253 (RVGGPAVLAE…REAVLRLRAS (204 aa)) form the FAD-binding PCMH-type domain. The active site involves R193. S270 acts as the Proton donor in catalysis. The active site involves E374.

The protein belongs to the MurB family. It depends on FAD as a cofactor.

It localises to the cytoplasm. The enzyme catalyses UDP-N-acetyl-alpha-D-muramate + NADP(+) = UDP-N-acetyl-3-O-(1-carboxyvinyl)-alpha-D-glucosamine + NADPH + H(+). The protein operates within cell wall biogenesis; peptidoglycan biosynthesis. Cell wall formation. The protein is UDP-N-acetylenolpyruvoylglucosamine reductase of Nocardia farcinica (strain IFM 10152).